A 287-amino-acid chain; its full sequence is Oxaloacetate decarboxylase (287 aa).

Ser50 is a binding site for substrate. Asp88 contributes to the Mg(2+) binding site. The substrate site is built by Arg159 and His235.

The protein belongs to the isocitrate lyase/PEP mutase superfamily. Oxaloacetate decarboxylase family. In terms of assembly, homotetramer; dimer of dimers. Mg(2+) serves as cofactor.

It carries out the reaction oxaloacetate + H(+) = pyruvate + CO2. Its function is as follows. Catalyzes the decarboxylation of oxaloacetate into pyruvate. Seems to play a role in maintaining cellular concentrations of bicarbonate and pyruvate. The sequence is that of Oxaloacetate decarboxylase from Marinomonas sp. (strain MWYL1).